The sequence spans 2486 residues: MSLTTDEAGRKSICLFPAIVTNTKSANKPGMQKVALDPILCRDLNDHDRFQNRGELQLLLSTAWTIVLHRFAEANPVHFAVVVDIKRKKLCESWSVEVRPRSLVSSLLDLESWTISTLSRPSYHTFNTAVFIRDEYLTESEMSDVNIVAHTNKSQITVNLVYRCRHLSAFHAENLMSSFSCAMQSVLREPHQPLGKISLCSLAQQQQISRWQNQPLKEDSKTAMWHRLAEFSARQPLSPAVQSTSGYLTYADLDELSSRMAVCLQDKHRVKPGDMVLLCVQKTPWAIVAMLAINKTGGCFVPCDPTHPVARRQVMATRCQARLAVVSPGYEDLLARIVPEISINPEPAMTEWRESFVPGDDNRTHRPIFSPSAPAYCFFTSGSTGEPKGCIGSHSALAALAHQVPALRMSTESRVLQFAKFGFGISFIEIFCTLAAGGTVCILSDGERLDALPDAMNQMRVNWALLTPTVTQSLVPEQIPGLGMLFLGGEAPDDGLILRWKDKVSLFQVFGTTEMAGVTLVSSRITSPAQRKTVGFGANARVWLCDVSEEEENNAGNLSLAPIGAVGELVIGGPSLGAGYLGDPQRTHALFLELPTSVVAGFSSNLQRVYKTGDLVRYNHDGSLSYIGRRGTQVKLRGQRLELEEVECHIIRLLAGTKTWTGALRVIALVIDPSGQDQTQVDRCTLAAFILMPQASREPRTSSNGTLEFLKLREQDHRDLDMVQEKLRDTLPPFMVPQIFLALVDVPRTATGKVDRNRIQRQINALPYQDLQHLAGRRVQMLRAQTDIELKVHALICDVLQIQPEDVSMLDDFFQLGGNSMTAITLVSAAKKQEALKLAVADVFKHPVLADLARSAKETSKVSTVQIATQRPFMMLDEESLDLNELKQTVVTQCNIGLSSLEDAYPCTPLQEGMMALTEQRRFSYRAKVQCHLQPEIDLSQFRRAWERVVVRNEILRTRLVSVSSQGVWQVVLRGSFAWDDTESQADEAPMGLGAKLVRGVIISTRSKGTFFILTIHHAICDLWAIRLLLDQVWREYTNVHAGTGSAAPNRFSQFVRYVRRMRNDPASEAYWKGQFAGLDSQVFPELPQPNFIPSPDDEIQHQISLPVRISETSTLSNYIRLAWAMVISHYTATDDVVFGEILNGRGAIMSEHGEDAVEHIVGPTLVSVPRRVELDYEMSVSEALSRIQEQRTEMIPFEQVGLQYIQRYSPETEVACMFQSHIVVQSAWNPPGQIFQSVQAGASITGGFASYAIGLECRLSMNESRLGLTACFDSRVVSRPHMQRLLNHLHMVLESMIQDPYQRLKSVPRVSSQDLDRIYTWNVGIPTNICGNVHESIRAQARKTPLAPAIDAWDGKLNFNELEHHSNQAALELQRRGLVPGDFVPLLFERSMWTPVAMIAVNKAGAAFVPMDTEQPLPRLQAMAKQVKCTVIVCSDSMRSMACQVTPAATVIPFSNVRSSGLRHCPLELQQLPTVTAHGAMYAAFTSGSTGTPKGVVIEHGSYCVAAQEYNKQTLIDRHSRVLQFASYSFDAHIGETISTLMAGACVCIPSDQDRQNALAQAASSMQITHAMLTPAVARLIRREEMPSLRTLTLMGEAMRPSDYAYWAEKVRLFNGYGPTECTVAISCREYRPGDAVQDIGWPRAAGVWITDPRDYHQLMPMGAVGELLLEGPPVARGYLNNPEQTAKAFISRPRWRPDIGHAHRIYRTGDLVRYTEDKSLQYVGRIGDQMKIRGQRIERGEVESQLRRFWLPTGVEMAVDAVLAGDNRDRVCLVAFIEHNRKKVDGTDQGLCQSMLTSPDGDFSLQVIRVETQLQQHLPRFMVPVIFVPIYRLPHMLSGKIDRPRLKRELQAYTWEELRQFFPAAAPTRPPSTDQERALQDVWAHVLQVPASRIGVDDNFFHIGGDSVTGMQAVAQARTKHLDHSLADIFRYKTIAEILSHTSSASKTGADLANDIGGPVQLLGGRDALEQLDVSKEEIEDIYPCAPVQQGILLVQARKPAFYHVAFSWEVTNSTVEKTGRAIEQIIARHAIFRTCFLQPGSNSSSFFQVVLRCRKQEIPIRALSDEIHQFPGDFQPSARVSSRFSIYYNHGNTSIFVRLDISHALWDGGPIMVVQRELDLGSQGQLIRYPEPSLYRNYIAYIARQDQEAAAGFWTTHLKDMAACHFPSLLTSDLRGPDTPEDLNFELRDYAAIRPYCRRINVTVPNFFCLVWAMVLRCVTLKDQICFGNLVSGRDLPLDDVLNIAGPMINLLPCRIDLSNGKVAEILQQIYSDYAASLSHQTFPIANLRSPCGRSPMAQFDTQLSIRRADSTNDTRNVHLCNIQSWDPHESRVNCYVILEDTRTQVNIRYWKSTMSTEQAALVRTCFCSAVSQLLDGENARVADLALISAVQRARIWGFLSSSETIVEPLERIWAEVLNRAQTQIGGNDDFFRLGGDSILAVRMVSLARKGGIDIRVADVFKFSTIYKLARLLQTQAQTAEGE.

Residues F231 to R637 form an adenylation 1 region. Positions T786–S860 constitute a Carrier 1 domain. Residue S820 is modified to O-(pantetheine 4'-phosphoryl)serine. The tract at residues E902–Q1314 is condensation 1. The segment at R1339–R1735 is adenylation 2. 2 consecutive Carrier domains span residues P1872–S1948 and S2404–A2480. Residues S1909 and S2441 each carry the O-(pantetheine 4'-phosphoryl)serine modification. Residues S2404–A2480 are condensation 2.

It belongs to the NRP synthetase family.

It participates in secondary metabolite biosynthesis. Functionally, nonribosomal peptide synthetase; part of the gene cluster that mediates the biosynthesis of the benzazepine alkaloid nanangelenin A which contains an unprecedented 3,4-dihydro-1-benzazepine-2,5-dione-N-prenyl-N-acetoxy-anthranilamide scaffold. The first step of nanangelenin biosynthesis is catalyzed by the indoleamine 2,3-dioxygenase nanC which produces N-formyl-kynurenine through the catabolism of tryptophan. The two-module NRPS nanA then utilizes anthranilate (Ant) and L-kynurenine (L-Kyn) to assemble the dipeptide product nanangelenin B. The first adenylation domain of nanA (A1) loads anthranilate onto the T1 domain, while A2 loads kynurenine, generated through spontaneous nonenzymatic deformylation of the nanC-supplied N-formyl-kynurenine. The peptide bond formation between the tethered amino acids is catalyzed by the first condensation domain (C1) between anthranilate's carbonyl carbon and kynurenine's aliphatic primary amine. The second C domain (C2) catalyzes the final cyclization event between the aromatic amine of kynurenine and the tethered carbonyl carbon, yielding nanangelenin B. The terminal T3 domain enhances the catalytic efficiency of C2, suggesting the T2-tethered Ant-L-Kyn is transferred to T3 prior to cyclization by C2. Once released from nanA, nanangelenin B is then prenylated by the prenyltransferase nanD to form nanangelenin C. Nanangelenin C is then N-hydroxylated by the FAD-dependent monooxygenase nanF and further acetylated by the acetyltransferase nanB to yield nanangelenin F. Finally, the N-methyltransferase nanE methylates the amide nitrogen of 1-benzazepine to convert nanangelenin F into nanangelenin A. NanE is also able to methylate most of the intermediates of the pathway such as nanangelenin B and nanangelenin C to produce nanangelenin D and nanangelenin E, respectively. The sequence is that of Nonribosomal peptide synthetase nanA from Aspergillus nanangensis.